The following is a 103-amino-acid chain: Stefin-3 (103 aa).

Residues 52–56 (QVVAG) carry the Secondary area of contact motif.

Belongs to the cystatin family.

It is found in the cytoplasm. In terms of biological role, this is an intracellular thiol proteinase inhibitor. The sequence is that of Stefin-3 (Stfa3) from Mus musculus (Mouse).